Consider the following 345-residue polypeptide: MSKKKVMVGMSGGIDSSVTAYMLQNEGYEVEGIYLKLHNRTDGYHEKNLGYIEDVAKFLNIKYYILDLADKFSKEVYDYFVDSYLTGTTPNPCVKCNRQIKFGAMLDFAKQHGASYLATGHYAKTDGKFFYEADDKTKDQSYFLSQVDKDALKYMMFPLSTYKKEDIVKFGAKLDVAYKKITEKSESQEICFVETVYTDVVKKHANIDQEGDVLDENGKVVGKHKGFAHYTIGKRRGFTVKGAQEPHFVTKLNPKDNTIVVGKKEALEVNEVVGNNLNMFIDDTKFSCNVKLRYRSVSTPCEVQIKDEKAYITLKEPVYGVAKGQLAVFYHEEKVIGSAWIESTK.

ATP contacts are provided by residues Gly9 to Ser16 and Leu35. Cys96 (nucleophile) is an active-site residue. An intrachain disulfide couples Cys96 to Cys191. Gly120 lines the ATP pocket. An interaction with tRNA region spans residues Lys138 to Gln140. The Cysteine persulfide intermediate role is filled by Cys191. The segment at Arg293 to Tyr294 is interaction with tRNA.

It belongs to the MnmA/TRMU family.

Its subcellular location is the cytoplasm. It catalyses the reaction S-sulfanyl-L-cysteinyl-[protein] + uridine(34) in tRNA + AH2 + ATP = 2-thiouridine(34) in tRNA + L-cysteinyl-[protein] + A + AMP + diphosphate + H(+). Its function is as follows. Catalyzes the 2-thiolation of uridine at the wobble position (U34) of tRNA, leading to the formation of s(2)U34. The polypeptide is tRNA-specific 2-thiouridylase MnmA 1 (Aliarcobacter butzleri (strain RM4018) (Arcobacter butzleri)).